We begin with the raw amino-acid sequence, 474 residues long: ATP synthase subunit beta (474 aa).

152–159 (GGAGVGKT) contacts ATP.

This sequence belongs to the ATPase alpha/beta chains family. In terms of assembly, F-type ATPases have 2 components, CF(1) - the catalytic core - and CF(0) - the membrane proton channel. CF(1) has five subunits: alpha(3), beta(3), gamma(1), delta(1), epsilon(1). CF(0) has three main subunits: a(1), b(2) and c(9-12). The alpha and beta chains form an alternating ring which encloses part of the gamma chain. CF(1) is attached to CF(0) by a central stalk formed by the gamma and epsilon chains, while a peripheral stalk is formed by the delta and b chains.

It localises to the cell inner membrane. The enzyme catalyses ATP + H2O + 4 H(+)(in) = ADP + phosphate + 5 H(+)(out). Its function is as follows. Produces ATP from ADP in the presence of a proton gradient across the membrane. The catalytic sites are hosted primarily by the beta subunits. This Paramagnetospirillum magneticum (strain ATCC 700264 / AMB-1) (Magnetospirillum magneticum) protein is ATP synthase subunit beta.